Here is a 299-residue protein sequence, read N- to C-terminus: Probable 4-deoxy-4-formamido-L-arabinose-phosphoundecaprenol deformylase ArnD (299 aa).

Positions 2-263 (IDVGLRIDVD…EASARGIRFV (262 aa)) constitute a NodB homology domain.

It belongs to the polysaccharide deacetylase family. ArnD deformylase subfamily.

The catalysed reaction is 4-deoxy-4-formamido-alpha-L-arabinopyranosyl di-trans,octa-cis-undecaprenyl phosphate + H2O = 4-amino-4-deoxy-alpha-L-arabinopyranosyl di-trans,octa-cis-undecaprenyl phosphate + formate. Its pathway is glycolipid biosynthesis; 4-amino-4-deoxy-alpha-L-arabinose undecaprenyl phosphate biosynthesis; 4-amino-4-deoxy-alpha-L-arabinose undecaprenyl phosphate from UDP-4-deoxy-4-formamido-beta-L-arabinose and undecaprenyl phosphate: step 2/2. The protein operates within bacterial outer membrane biogenesis; lipopolysaccharide biosynthesis. In terms of biological role, catalyzes the deformylation of 4-deoxy-4-formamido-L-arabinose-phosphoundecaprenol to 4-amino-4-deoxy-L-arabinose-phosphoundecaprenol. The modified arabinose is attached to lipid A and is required for resistance to polymyxin and cationic antimicrobial peptides. The polypeptide is Probable 4-deoxy-4-formamido-L-arabinose-phosphoundecaprenol deformylase ArnD (Aeromonas salmonicida (strain A449)).